A 559-amino-acid chain; its full sequence is Formate--tetrahydrofolate ligase (559 aa).

67–74 (TPAGEGKS) is a binding site for ATP.

The protein belongs to the formate--tetrahydrofolate ligase family.

It carries out the reaction (6S)-5,6,7,8-tetrahydrofolate + formate + ATP = (6R)-10-formyltetrahydrofolate + ADP + phosphate. The protein operates within one-carbon metabolism; tetrahydrofolate interconversion. The polypeptide is Formate--tetrahydrofolate ligase (Lactobacillus delbrueckii subsp. bulgaricus (strain ATCC BAA-365 / Lb-18)).